The sequence spans 49 residues: Large ribosomal subunit protein bL33 (49 aa).

It belongs to the bacterial ribosomal protein bL33 family.

This Desulforudis audaxviator (strain MP104C) protein is Large ribosomal subunit protein bL33.